The following is a 107-amino-acid chain: Iron-sulfur cluster assembly protein CyaY (107 aa).

The protein belongs to the frataxin family.

Its function is as follows. Involved in iron-sulfur (Fe-S) cluster assembly. May act as a regulator of Fe-S biogenesis. The protein is Iron-sulfur cluster assembly protein CyaY of Enterobacter sp. (strain 638).